Consider the following 517-residue polypeptide: Ribose import ATP-binding protein RbsA 2 (517 aa).

ABC transporter domains are found at residues 10–245 (LRIE…GRSI) and 255–498 (DAGE…VSTH). An ATP-binding site is contributed by 42-49 (GENGAGKS). Positions 497–517 (THTGNSPHSGGTDGTEASRGH) are disordered.

This sequence belongs to the ABC transporter superfamily. Ribose importer (TC 3.A.1.2.1) family. In terms of assembly, the complex is composed of an ATP-binding protein (RbsA), two transmembrane proteins (RbsC) and a solute-binding protein (RbsB).

The protein localises to the cell membrane. It carries out the reaction D-ribose(out) + ATP + H2O = D-ribose(in) + ADP + phosphate + H(+). Its function is as follows. Part of the ABC transporter complex RbsABC involved in ribose import. Responsible for energy coupling to the transport system. This Streptomyces coelicolor (strain ATCC BAA-471 / A3(2) / M145) protein is Ribose import ATP-binding protein RbsA 2.